The primary structure comprises 217 residues: Adenylate kinase (217 aa).

10-15 (GAGKGT) is a binding site for ATP. Residues 30-59 (STGDMFRAAMKNETELGLKAKSYMDAGELV) are NMP. Residues Thr-31, Arg-36, 57 to 59 (ELV), 85 to 88 (GFPR), and Gln-92 each bind AMP. Residues 126–163 (GRRVSPTSGRTYHVIFNPPKVEGICDVDGSELIQRDDD) are LID. ATP is bound by residues Arg-127 and 136–137 (TY). Residues Arg-160 and Arg-171 each contribute to the AMP site. Position 199 (Gln-199) interacts with ATP.

It belongs to the adenylate kinase family. Monomer.

The protein localises to the cytoplasm. It carries out the reaction AMP + ATP = 2 ADP. The protein operates within purine metabolism; AMP biosynthesis via salvage pathway; AMP from ADP: step 1/1. Its function is as follows. Catalyzes the reversible transfer of the terminal phosphate group between ATP and AMP. Plays an important role in cellular energy homeostasis and in adenine nucleotide metabolism. The protein is Adenylate kinase of Halalkalibacterium halodurans (strain ATCC BAA-125 / DSM 18197 / FERM 7344 / JCM 9153 / C-125) (Bacillus halodurans).